Here is an 831-residue protein sequence, read N- to C-terminus: Periplasmic nitrate reductase (831 aa).

The tat-type signal signal peptide spans 1 to 31 (MTISRRDLLKAQAAGIAAMAANIPLSSQAPA). The 57-residue stretch at 41-97 (ITWSKAPCRFCGTGCGVMVGVKEGRVVATHGDLLAEVNRGLNCVKGYFLSKIMYGAD) folds into the 4Fe-4S Mo/W bis-MGD-type domain. 4 residues coordinate [4Fe-4S] cluster: cysteine 48, cysteine 51, cysteine 55, and cysteine 83. Residues lysine 85, glutamine 152, asparagine 177, cysteine 181, 214–221 (WGSNMAEM), 245–249 (STFTH), 264–266 (GTD), methionine 375, glutamine 379, asparagine 485, 511–512 (SD), lysine 534, aspartate 561, and 721–730 (TGRVLEHWHS) each bind Mo-bis(molybdopterin guanine dinucleotide). Tryptophan 797 contributes to the substrate binding site. 2 residues coordinate Mo-bis(molybdopterin guanine dinucleotide): asparagine 805 and lysine 822.

It belongs to the prokaryotic molybdopterin-containing oxidoreductase family. NasA/NapA/NarB subfamily. As to quaternary structure, component of the periplasmic nitrate reductase NapAB complex composed of NapA and NapB. [4Fe-4S] cluster is required as a cofactor. Requires Mo-bis(molybdopterin guanine dinucleotide) as cofactor. Predicted to be exported by the Tat system. The position of the signal peptide cleavage has not been experimentally proven.

The protein localises to the periplasm. It catalyses the reaction 2 Fe(II)-[cytochrome] + nitrate + 2 H(+) = 2 Fe(III)-[cytochrome] + nitrite + H2O. Its function is as follows. Catalytic subunit of the periplasmic nitrate reductase complex NapAB. Receives electrons from NapB and catalyzes the reduction of nitrate to nitrite. The chain is Periplasmic nitrate reductase from Paracoccus pantotrophus (Thiosphaera pantotropha).